A 208-amino-acid chain; its full sequence is Bacitracin transport permease protein BCRB (208 aa).

Transmembrane regions (helical) follow at residues 23–43 (LYIVLLIGVPLYGVITSYLFN), 70–90 (VLLLIWIMMLTLIAWVLTLLF), 111–131 (FMIGGALLFFLVSPIIFVTLL), 135–155 (YVPTIIFTIIISMVSIMVYGT), 159–179 (ALFPWSAVWVIASGTFFPEYP), and 182–202 (YSFISVAATTVLGLAATIVYF).

The protein resides in the cell membrane. Functionally, part of the binding-protein-dependent transport system for bacitracin that confer resistance to this antibiotic; probably responsible for the translocation of the substrate across the membrane. The sequence is that of Bacitracin transport permease protein BCRB (bcrB) from Bacillus licheniformis.